A 399-amino-acid polypeptide reads, in one-letter code: Argininosuccinate synthase (399 aa).

9–17 (AYSGGLDTS) lines the ATP pocket. Y88 contacts L-citrulline. G118 provides a ligand contact to ATP. L-aspartate is bound by residues T120, N124, and D125. Residue N124 coordinates L-citrulline. R128, S176, E261, and Y273 together coordinate L-citrulline.

It belongs to the argininosuccinate synthase family. Type 1 subfamily. As to quaternary structure, homotetramer.

Its subcellular location is the cytoplasm. It catalyses the reaction L-citrulline + L-aspartate + ATP = 2-(N(omega)-L-arginino)succinate + AMP + diphosphate + H(+). It functions in the pathway amino-acid biosynthesis; L-arginine biosynthesis; L-arginine from L-ornithine and carbamoyl phosphate: step 2/3. In Mycobacterium leprae (strain TN), this protein is Argininosuccinate synthase.